We begin with the raw amino-acid sequence, 323 residues long: CYFIP-related Rac1 interactor A (323 aa).

This sequence belongs to the CYRI family. As to quaternary structure, interacts with RAC1 (GTP-bound form preferentially).

The protein resides in the membrane. Its function is as follows. May negatively regulate RAC1 signaling and RAC1-driven cytoskeletal remodeling. May regulate chemotaxis, cell migration and epithelial polarization by controlling the polarity, plasticity, duration and extent of protrusions. In Bos taurus (Bovine), this protein is CYFIP-related Rac1 interactor A (CYRIA).